The chain runs to 419 residues: eIF5-mimic protein 1 (419 aa).

The tract at residues 1–22 (MNKHQKPVLTGQRFKTRKRDEK) is disordered. Lys117 is modified (N6-acetyllysine). The region spanning 248-415 (VQQSLGTRKE…QNAEEESESE (168 aa)) is the W2 domain. 3 positions are modified to phosphoserine: Ser412, Ser414, and Ser419.

This sequence belongs to the BZW family. As to quaternary structure, interacts with EIF3E, EIF2S2 and EIF3C. As to expression, expressed at high levels in heart, and at lower levels in skeletal muscle, spleen and lung. Expressed at low levels in brain regions where nascent and immature neurons are present.

The protein resides in the cytoplasm. Translation initiation regulator which represses non-AUG initiated translation and repeat-associated non-AUG (RAN) initiated translation by acting as a competitive inhibitor of eukaryotic translation initiation factor 5 (EIF5) function. Increases the accuracy of translation initiation by impeding EIF5-dependent translation from non-AUG codons by competing with it for interaction with EIF2S2 within the 43S pre-initiation complex (PIC) in an EIF3C-binding dependent manner. The protein is eIF5-mimic protein 1 (Bzw2) of Rattus norvegicus (Rat).